Consider the following 177-residue polypeptide: Adenylyl-sulfate kinase (177 aa).

Gly12 to Thr19 provides a ligand contact to ATP. Ser86 serves as the catalytic Phosphoserine intermediate.

It belongs to the APS kinase family.

It carries out the reaction adenosine 5'-phosphosulfate + ATP = 3'-phosphoadenylyl sulfate + ADP + H(+). It functions in the pathway sulfur metabolism; hydrogen sulfide biosynthesis; sulfite from sulfate: step 2/3. Catalyzes the synthesis of activated sulfate. The polypeptide is Adenylyl-sulfate kinase (Picosynechococcus sp. (strain ATCC 27264 / PCC 7002 / PR-6) (Agmenellum quadruplicatum)).